The chain runs to 1375 residues: Probable GMP synthase [glutamine-hydrolyzing] (1375 aa).

The region spanning Gln7–Asp119 is the Glutamine amidotransferase type-1; first part domain. The Nucleophile role is filled by Cys84. The interval Ser120–Cys500 is insert-1. 2 consecutive N-acetyltransferase domains span residues Leu141 to Glu300 and Val318 to Lys484. The region spanning Ser501 to Cys580 is the Glutamine amidotransferase type-1; second part domain. Residues His554 and Glu556 contribute to the active site. The interval Ile597 to Thr1071 is insert-2. The N-acetyltransferase 3 domain maps to Met612–Glu765. The segment at Arg1011–Gly1036 is disordered. Positions Asp1014–Ser1027 are enriched in basic and acidic residues. The GMPS ATP-PPase domain maps to Tyr1055–Arg1250. Ser1083 to Ser1089 lines the ATP pocket.

Homodimer.

It carries out the reaction XMP + L-glutamine + ATP + H2O = GMP + L-glutamate + AMP + diphosphate + 2 H(+). The protein operates within purine metabolism; GMP biosynthesis; GMP from XMP (L-Gln route): step 1/1. Catalyzes the synthesis of GMP from XMP. This is Probable GMP synthase [glutamine-hydrolyzing] (guaA) from Helicobacter hepaticus (strain ATCC 51449 / 3B1).